A 432-amino-acid chain; its full sequence is Adenylosuccinate synthetase (432 aa).

Residues Gly13 to Lys19 and Gly41 to Thr43 contribute to the GTP site. Catalysis depends on Asp14, which acts as the Proton acceptor. Mg(2+)-binding residues include Asp14 and Gly41. Residues Asp14–Lys17, Asn39–His42, Thr130, Arg144, Gln225, Thr240, and Arg304 contribute to the IMP site. Catalysis depends on His42, which acts as the Proton donor. Ala300–Arg306 lines the substrate pocket. GTP is bound by residues Arg306, Lys332–Asp334, and Ser415–Gly417.

It belongs to the adenylosuccinate synthetase family. In terms of assembly, homodimer. Mg(2+) is required as a cofactor.

It localises to the cytoplasm. The catalysed reaction is IMP + L-aspartate + GTP = N(6)-(1,2-dicarboxyethyl)-AMP + GDP + phosphate + 2 H(+). It functions in the pathway purine metabolism; AMP biosynthesis via de novo pathway; AMP from IMP: step 1/2. Plays an important role in the de novo pathway of purine nucleotide biosynthesis. Catalyzes the first committed step in the biosynthesis of AMP from IMP. The polypeptide is Adenylosuccinate synthetase (Serratia proteamaculans (strain 568)).